Consider the following 141-residue polypeptide: VLSPADKTNVKDAWGKVGGHAGEYGAEALERMFLSFPTTKTYFPHFDLSHGSAQVKGHGKKVADALTLAVGHVDDMPQALSALSDLHAHKLRVDPVNFKLLSHCLLVTLAAHLPAEFTPAVHASLDKFLASVSTVLTSKYR.

Residues 1–141 (VLSPADKTNV…VSTVLTSKYR (141 aa)) enclose the Globin domain. The residue at position 3 (Ser-3) is a Phosphoserine. The residue at position 7 (Lys-7) is an N6-succinyllysine. At Thr-8 the chain carries Phosphothreonine. At Lys-11 the chain carries N6-succinyllysine. An N6-acetyllysine; alternate modification is found at Lys-16. Residue Lys-16 is modified to N6-succinyllysine; alternate. Tyr-24 is modified (phosphotyrosine). Phosphoserine is present on Ser-35. Lys-40 is modified (N6-succinyllysine). Residue Ser-49 is modified to Phosphoserine. Position 58 (His-58) interacts with O2. His-87 is a heme b binding site. Ser-102 bears the Phosphoserine mark. Thr-108 is subject to Phosphothreonine. 2 positions are modified to phosphoserine: Ser-124 and Ser-131. 2 positions are modified to phosphothreonine: Thr-134 and Thr-137. Residue Ser-138 is modified to Phosphoserine.

It belongs to the globin family. Heterotetramer of two alpha chains and two beta chains. In terms of tissue distribution, red blood cells.

Functionally, involved in oxygen transport from the lung to the various peripheral tissues. This is Hemoglobin subunit alpha-1/2 from Macaca sinica (Toque macaque).